The sequence spans 692 residues: Elongation factor G 1 (692 aa).

A tr-type G domain is found at 8 to 283 (EKTRNIGIMA…SVVEYLPSPV (276 aa)). GTP is bound by residues 17-24 (AHIDAGKT), 81-85 (DTPGH), and 135-138 (NKMD).

The protein belongs to the TRAFAC class translation factor GTPase superfamily. Classic translation factor GTPase family. EF-G/EF-2 subfamily.

The protein resides in the cytoplasm. Catalyzes the GTP-dependent ribosomal translocation step during translation elongation. During this step, the ribosome changes from the pre-translocational (PRE) to the post-translocational (POST) state as the newly formed A-site-bound peptidyl-tRNA and P-site-bound deacylated tRNA move to the P and E sites, respectively. Catalyzes the coordinated movement of the two tRNA molecules, the mRNA and conformational changes in the ribosome. The chain is Elongation factor G 1 from Geobacter metallireducens (strain ATCC 53774 / DSM 7210 / GS-15).